Consider the following 55-residue polypeptide: MKIFFAVLVILVLFSMLIWTAYGTPYPVNCKTDRDCVMCGLGISCKNGYCQGCTR.

Residues 1-23 form the signal peptide; that stretch reads MKIFFAVLVILVLFSMLIWTAYG. Disulfide bonds link C30-C45, C36-C50, and C39-C53.

Expressed by the venom gland.

The protein resides in the secreted. The protein is Neurotoxin BmP08 of Olivierus martensii (Manchurian scorpion).